The sequence spans 1004 residues: Phyllocladan-16-alpha-ol synthase (1004 aa).

Positions Asp321–Asp324 match the DXDD motif motif. Residues Asp667, Glu671, Asn872, Asp873, Ser876, and Asp880 each coordinate Mg(2+). Residues Asp667–Glu671 carry the DEXXE motif motif.

Belongs to the terpene synthase family. Mg(2+) serves as cofactor.

The enzyme catalyses (2E,6E,10E)-geranylgeranyl diphosphate = (+)-copalyl diphosphate. It carries out the reaction (+)-copalyl diphosphate + H2O = phyllocladan-16alpha-ol + diphosphate. In terms of biological role, involved in the synthesis of labdane-related hydrocarbons by catalyzing the conversion of geranylgeranyl diphosphate (GGDP) to phyllocladan-16-alpha-ol in a two step via type B cyclization into a (+)-copalyl diphosphate ((+)-CDP) intermediate. The chain is Phyllocladan-16-alpha-ol synthase (PaDC1) from Phomopsis amygdali (Fusicoccum amygdali).